A 43-amino-acid polypeptide reads, in one-letter code: Metallothionein A (43 aa).

The tract at residues 1–16 (SCAGSCKCKNCRCRSC) is beta. Residues Cys2, Cys6, Cys8, Cys11, Cys13, Cys16, Cys20, Cys21, Cys23, Cys24, Cys28, Cys31, Cys35, and Cys37 each coordinate a divalent metal cation. Residues 17 to 43 (RKSCCSCCPAGCNNCAKGCVCKEPASS) are alpha.

The protein belongs to the metallothionein superfamily. Type 1 family.

In terms of biological role, metallothioneins have a high content of cysteine residues that bind various heavy metals. This chain is Metallothionein A, found in Colinus virginianus (Northern bobwhite).